Reading from the N-terminus, the 149-residue chain is Large ribosomal subunit protein bL9 (149 aa).

The protein belongs to the bacterial ribosomal protein bL9 family.

Functionally, binds to the 23S rRNA. The sequence is that of Large ribosomal subunit protein bL9 from Mannheimia succiniciproducens (strain KCTC 0769BP / MBEL55E).